The following is a 196-amino-acid chain: MEIISLKRFILLMLATSSLLTSNIFCTDESRMPNLYSKKNYDKYSEPRGDLGWEKERSLTFEEVKDWAPKIKMNKPVVNKMPPSAANLPLRFGRNMEEERSTRAMAHLPLRLGKNREDSLSRWVPNLPQRFGRTTTAKSITKTLSNLLQQSMHSPSTNGLLYSMACQPQEIQNPGQKNLRRRGFQKIDDAELKQEK.

The signal sequence occupies residues 1 to 21 (MEIISLKRFILLMLATSSLLT). The propeptide occupies 22–57 (SNIFCTDESRMPNLYSKKNYDKYSEPRGDLGWEKER). F92 bears the Phenylalanine amide mark. 2 propeptides span residues 95–99 (NMEEE) and 115–121 (NREDSLS). Residue F131 is modified to Phenylalanine amide. Residues 134–196 (TTTAKSITKT…IDDAELKQEK (63 aa)) constitute a propeptide that is removed on maturation.

This sequence belongs to the FARP (FMRFamide related peptide) family.

The protein resides in the secreted. In terms of biological role, efficiently inhibits forskolin-induced production of cAMP. Acts as a potent negative regulator of gonadotropin synthesis and secretion. Induces secretion of prolactin. Efficiently inhibits forskolin-induced production of cAMP. Blocks morphine-induced analgesia. Its function is as follows. Shows no inhibitory activity of forskolin-induced production of cAMP. The sequence is that of Pro-FMRFamide-related neuropeptide VF (NPVF) from Bos taurus (Bovine).